Reading from the N-terminus, the 894-residue chain is Nitrate reductase [NADPH] (894 aa).

The disordered stretch occupies residues 1–79 (MAVKSQLGVT…PEDLKTPDHR (79 aa)). Polar residues predominate over residues 7-16 (LGVTYTTKTF). The segment covering 69-79 (LPEDLKTPDHR) has biased composition (basic and acidic residues). Cys-169 is a binding site for Mo-molybdopterin. The Cytochrome b5 heme-binding domain maps to 535–610 (VRIISLEELK…MPQYHIGTLN (76 aa)). 2 residues coordinate heme: His-570 and His-593. One can recognise an FAD-binding FR-type domain in the interval 638 to 749 (KYWSKAILET…KGPVGKFEYL (112 aa)). FAD contacts are provided by residues 692–695 (RAYT), 709–713 (LIKIY), 723–725 (KMT), Ser-773, and Thr-776.

Belongs to the nitrate reductase family. As to quaternary structure, homodimer. FAD is required as a cofactor. The cofactor is heme. It depends on Mo-molybdopterin as a cofactor.

It carries out the reaction nitrite + NADP(+) + H2O = nitrate + NADPH + H(+). Functionally, nitrate reductase is a key enzyme involved in the first step of nitrate assimilation in plants, fungi and bacteria. This is Nitrate reductase [NADPH] (NIA) from Beauveria bassiana (White muscardine disease fungus).